Here is a 298-residue protein sequence, read N- to C-terminus: Foldase protein PrsA 1 (298 aa).

The N-terminal stretch at 1–19 is a signal peptide; sequence MKKWLIALAGVLLTFTLAG. The N-palmitoyl cysteine moiety is linked to residue cysteine 20. A lipid anchor (S-diacylglycerol cysteine) is attached at cysteine 20. The PpiC domain occupies 136-232; that stretch reads EPKVTVQHIL…NGYEIIRMIK (97 aa).

The protein belongs to the PrsA family.

The protein resides in the cell membrane. It catalyses the reaction [protein]-peptidylproline (omega=180) = [protein]-peptidylproline (omega=0). Plays a major role in protein secretion by helping the post-translocational extracellular folding of several secreted proteins. The chain is Foldase protein PrsA 1 (prsA1) from Lactiplantibacillus plantarum (strain ATCC BAA-793 / NCIMB 8826 / WCFS1) (Lactobacillus plantarum).